The chain runs to 1393 residues: MFGEGSRDNAALSKERLFDKLEIGIASDITIRDKWSCGEIKKPETINYRTFKPEKGGLFCEKIFGPTKDWECCCGKYKKIKHKGIVCDRCGVEVTLSKVRRERMAHIELAVPIVHIWFFKTTPSRIGNVLGMTASDLERIIYYEEYVVIDPGKTDLNKKQLLNDAQYREVVEKWGKDSFVAKMGGEAIYDLLKSEDLQSLLKELKDRLRKTKSQQARMKLAKRLKIIEGFVSSSNNPEWMVLKSIPVVPPDLRPLVPLDGGRFATSDLNDLYRRVINRNNRLKAILRLKTPEVIVRNEKRMLQEAVDALFDNGRHGHPVMGAGNRPLKSLSEMLKGKNGRFRQNLLGKRVDYSGRSVIIVGPELKFNQCGLPKEMALELFEPFIIKRLKDQGSVYTIRSAKKMIQRGAPEVWDVLEEIIKGHPVLLNRAPTLHRLGIQAFEPVLIEGKAIRVHPLVCAAFNADFDGDQMAVHVPLSIEAQLEAKVLMMAPDNIFLPSSGKPVATPSKDMTLGIYYLMADPTYFPEDHGGKIKIFKDVAEVLRALYAGGFLDDRIDNRRDETGRGIHIHEKIKVRIDGQIIETTPGRVLFNRIVPKELGFQNYSMPSKRISELILQCYKKVGLEATVRFLDDLKDLGFIQATKAAISMGLKDVRIPEIKSDILKEAYDKVAVVKKQYDDGIITDGERHSKTISIWTEVSESLSDALYVEISKQTKSKHNPLYLMIDSGARGNKSQLKQLGALRGLMAKPNGAIIESPITSNFREGLTVLEYSISSHGARKGLADTALKTADSGYLTRRLVDVAQDVIITEKDCGTLNHIEISAIRQGSEELLPLKDRIYGRTVAEDIYQPGDKSKLLAKNGDVITSAQAELIDDAGIESIKIRSTLTCESRRGVCAKCYGLNLANGRLIGLGEAVGIIAAQSIGEPGTQLTMRTFHLGGIAATSSTPEIVTDCDGVLVYMDLRVVVGQDGNHLVLNKKGAIHVVRDEGRSLEEYKKLLSTKSIESLETYPVELGVKILVGDGEKVSAGQRIAEVELHNIPIICDKPGFVKYEDLVEGISTEKVVNKNTGLVELIVKQHRGELHPQIAIYSDAGLTELVGTYAIPSGAIISVEENQKVDPGMLLARLPRGAIKTKDITGGLPRVAELVEARKPEDAADIAKIDGVVDFKGIQKNKRILVVRDEITGMEEEHLIPLTKHLIVQRGDTVMKGQQLTDGLVVPHEILEICGVRELQKYLVNEVQEVYRLQGVDINDKHIEIIVRQMLQKVRITDPGDTTLLFGEEVNKKEFYEENRRTEEDGGKPAQAVPVLLGITKASLGTESFISAASFQDTTRVLTEAACSSKTDYLLGFKENVIMGHMIPGGTGFDTHKRIKQYLEKEQEDLVFDFVSESECAC.

4 residues coordinate Zn(2+): C72, C74, C87, and C90. Mg(2+) is bound by residues D463, D465, and D467. C812, C887, C894, and C897 together coordinate Zn(2+).

It belongs to the RNA polymerase beta' chain family. As to quaternary structure, the RNAP catalytic core consists of 2 alpha, 1 beta, 1 beta' and 1 omega subunit. When a sigma factor is associated with the core the holoenzyme is formed, which can initiate transcription. Mg(2+) is required as a cofactor. Requires Zn(2+) as cofactor.

It carries out the reaction RNA(n) + a ribonucleoside 5'-triphosphate = RNA(n+1) + diphosphate. Its function is as follows. DNA-dependent RNA polymerase catalyzes the transcription of DNA into RNA using the four ribonucleoside triphosphates as substrates. This is DNA-directed RNA polymerase subunit beta' from Chlamydia felis (strain Fe/C-56) (Chlamydophila felis).